A 312-amino-acid polypeptide reads, in one-letter code: Very-long-chain 3-oxoacyl-CoA reductase (312 aa).

The chain crosses the membrane as a helical span at residues 4 to 24; it reads ALPAAGFLYWVGAGTVAYLAL. NADP(+) is bound at residue 50–79; the sequence is GEWAVVTGGTDGIGKSYAEELAKRGMKVVL. Helical transmembrane passes span 182 to 202 and 271 to 291; these read GAIL…LTIY and GYLI…WIYL. Position 189 (Ser189) interacts with substrate. Tyr202 (proton acceptor) is an active-site residue. The short motif at 308–312 is the Di-lysine motif element; that stretch reads KIKKN.

Belongs to the short-chain dehydrogenases/reductases (SDR) family. 17-beta-HSD 3 subfamily.

Its subcellular location is the endoplasmic reticulum membrane. The enzyme catalyses a very-long-chain (3R)-3-hydroxyacyl-CoA + NADP(+) = a very-long-chain 3-oxoacyl-CoA + NADPH + H(+). The catalysed reaction is 17beta-estradiol + NAD(+) = estrone + NADH + H(+). It carries out the reaction 17beta-estradiol + NADP(+) = estrone + NADPH + H(+). It catalyses the reaction 3-oxooctadecanoyl-CoA + NADPH + H(+) = (3R)-hydroxyoctadecanoyl-CoA + NADP(+). The enzyme catalyses (7Z,10Z,13Z,16Z)-3-oxodocosatetraenoyl-CoA + NADPH + H(+) = (3R)-hydroxy-(7Z,10Z,13Z,16Z)-docosatetraenoyl-CoA + NADP(+). The catalysed reaction is 3-oxo-(7Z,10Z,13Z,16Z,19Z)-docosapentaenoyl-CoA + NADPH + H(+) = (3R)-hydroxy-(7Z,10Z,13Z,16Z,19Z)-docosapentaenoyl-CoA + NADP(+). It carries out the reaction (8Z,11Z,14Z)-3-oxoeicosatrienoyl-CoA + NADPH + H(+) = (3R)-hydroxy-(8Z,11Z,14Z)-eicosatrienoyl-CoA + NADP(+). The protein operates within lipid metabolism; fatty acid biosynthesis. It functions in the pathway steroid biosynthesis; estrogen biosynthesis. In terms of biological role, catalyzes the second of the four reactions of the long-chain fatty acids elongation cycle. This endoplasmic reticulum-bound enzymatic process, allows the addition of two carbons to the chain of long- and very long-chain fatty acids/VLCFAs per cycle. This enzyme has a 3-ketoacyl-CoA reductase activity, reducing 3-ketoacyl-CoA to 3-hydroxyacyl-CoA, within each cycle of fatty acid elongation. Thereby, it may participate in the production of VLCFAs of different chain lengths that are involved in multiple biological processes as precursors of membrane lipids and lipid mediators. May also catalyze the transformation of estrone (E1) into estradiol (E2) and play a role in estrogen formation. This chain is Very-long-chain 3-oxoacyl-CoA reductase (HSD17B12), found in Macaca fascicularis (Crab-eating macaque).